The chain runs to 343 residues: Small ribosomal subunit biogenesis GTPase RsgA (343 aa).

One can recognise a CP-type G domain in the interval 116-275 (RGQLKPVAAN…LIDSPGIREF (160 aa)). GTP-binding positions include 163–166 (NKFD) and 217–225 (GQSGVGKSS). Cys-299, Cys-304, His-306, and Cys-312 together coordinate Zn(2+).

This sequence belongs to the TRAFAC class YlqF/YawG GTPase family. RsgA subfamily. Monomer. Associates with 30S ribosomal subunit, binds 16S rRNA. Requires Zn(2+) as cofactor.

It is found in the cytoplasm. Functionally, one of several proteins that assist in the late maturation steps of the functional core of the 30S ribosomal subunit. Helps release RbfA from mature subunits. May play a role in the assembly of ribosomal proteins into the subunit. Circularly permuted GTPase that catalyzes slow GTP hydrolysis, GTPase activity is stimulated by the 30S ribosomal subunit. This is Small ribosomal subunit biogenesis GTPase RsgA from Pseudomonas fluorescens (strain SBW25).